Consider the following 726-residue polypeptide: MIYQGENLSVDYIENGIAHLVFNAAGSVNKLNIATLRSLGEAIDVLYKQKDLQALLLSSGKSAFIVGADITEFLGLFDTPEEELSDWLHQANVIFSRLEDLPVPTLSAITGFALGGGCECVLATDFRLADDTASIGLPETQLGIMPGWGGSVRLPRLIGADPAMEVITTGKPKRAKDALKIGMVDGIVSRETLIDASVSMLKQAIDGQLNWQQRREQKKAPIQLSPLEAAMSFNVAKGMIMKMAGKHYPAPLTAVKSIEQSANMHRDDALAIENKHFVALTRTDVAKSLVGIFLNDQLVKSKAKQAVKNSEPVKNAAVLGAGIMGGGIAYQSASKGVPVLMKDIAQASLDLGMNEASKLLNKQLERGRLSGLKMAQVLSSITPSLNYGGIETKDVIVEAVVENPTIKAAVLAEVENEVNEHAILASNTSTIPISLLAKSLKRPENFCGMHFFNPVHRMPLVEVIRGEKTSQQTIDRVVAYASQMGKTPIVVNDCPGFFVNRVLFPYFAGFSLLLRDGGNYQQIDKVMEKEFGWPMGPAYLLDVVGIDTAHHAQAVMAQGFPERMAKNGRDVIDAMFEDDRYGQKNGIGFYAYALDKKGKPKKNIDEKTNAIIATITDSTQPYTSEQISARMMIPMINEVIRCLDEGIIASPAEADMALVYGLGFPPFKGGVFRYLDSIGLDTYLDMAKEFEQLSPVYQVPDSIKQKAAAGECYYPAPKSSVSSPSV.

The interval 1–189 (MIYQGENLSV…KIGMVDGIVS (189 aa)) is enoyl-CoA hydratase/isomerase. Substrate is bound at residue Asp296. The interval 311–726 (EPVKNAAVLG…PKSSVSSPSV (416 aa)) is 3-hydroxyacyl-CoA dehydrogenase. Residues Met324, Asp343, 400–402 (VVE), Lys407, and Ser429 contribute to the NAD(+) site. The For 3-hydroxyacyl-CoA dehydrogenase activity role is filled by His450. Asn453 lines the NAD(+) pocket. Asn500 and Tyr660 together coordinate substrate.

The protein in the N-terminal section; belongs to the enoyl-CoA hydratase/isomerase family. This sequence in the C-terminal section; belongs to the 3-hydroxyacyl-CoA dehydrogenase family. Heterotetramer of two alpha chains (FadB) and two beta chains (FadA).

It carries out the reaction a (3S)-3-hydroxyacyl-CoA + NAD(+) = a 3-oxoacyl-CoA + NADH + H(+). The catalysed reaction is a (3S)-3-hydroxyacyl-CoA = a (2E)-enoyl-CoA + H2O. It catalyses the reaction a 4-saturated-(3S)-3-hydroxyacyl-CoA = a (3E)-enoyl-CoA + H2O. The enzyme catalyses (3S)-3-hydroxybutanoyl-CoA = (3R)-3-hydroxybutanoyl-CoA. It carries out the reaction a (3Z)-enoyl-CoA = a 4-saturated (2E)-enoyl-CoA. The catalysed reaction is a (3E)-enoyl-CoA = a 4-saturated (2E)-enoyl-CoA. It participates in lipid metabolism; fatty acid beta-oxidation. Its function is as follows. Involved in the aerobic and anaerobic degradation of long-chain fatty acids via beta-oxidation cycle. Catalyzes the formation of 3-oxoacyl-CoA from enoyl-CoA via L-3-hydroxyacyl-CoA. It can also use D-3-hydroxyacyl-CoA and cis-3-enoyl-CoA as substrate. The protein is Fatty acid oxidation complex subunit alpha of Aliivibrio salmonicida (strain LFI1238) (Vibrio salmonicida (strain LFI1238)).